The primary structure comprises 315 residues: UDP-N-acetylenolpyruvoylglucosamine reductase (315 aa).

One can recognise an FAD-binding PCMH-type domain in the interval 27-207 (RVGGPADVLY…TKRMNAITAR (181 aa)). Arginine 172 is an active-site residue. The tract at residues 214–236 (IREKTSGSTFANPDPPGTPNQRK) is disordered. Residue serine 221 is the Proton donor of the active site. Glutamate 297 is a catalytic residue.

It belongs to the MurB family. Requires FAD as cofactor.

The protein resides in the cytoplasm. It carries out the reaction UDP-N-acetyl-alpha-D-muramate + NADP(+) = UDP-N-acetyl-3-O-(1-carboxyvinyl)-alpha-D-glucosamine + NADPH + H(+). The protein operates within cell wall biogenesis; peptidoglycan biosynthesis. In terms of biological role, cell wall formation. This Maricaulis maris (strain MCS10) (Caulobacter maris) protein is UDP-N-acetylenolpyruvoylglucosamine reductase.